The sequence spans 323 residues: Protoheme IX farnesyltransferase (323 aa).

9 helical membrane passes run 28-48 (IIPL…NGQV), 50-70 (PVLL…AQTL), 99-119 (HALI…VVFV), 122-142 (ASAL…THML), 150-170 (IVIG…AVTG), 178-198 (ALFA…ALMI), 223-243 (IWIY…PLAA), 244-264 (SGIV…YKTW), and 279-299 (LFKY…VDSL).

The protein belongs to the UbiA prenyltransferase family. Protoheme IX farnesyltransferase subfamily.

The protein resides in the cell inner membrane. It carries out the reaction heme b + (2E,6E)-farnesyl diphosphate + H2O = Fe(II)-heme o + diphosphate. Its pathway is porphyrin-containing compound metabolism; heme O biosynthesis; heme O from protoheme: step 1/1. Functionally, converts heme B (protoheme IX) to heme O by substitution of the vinyl group on carbon 2 of heme B porphyrin ring with a hydroxyethyl farnesyl side group. The polypeptide is Protoheme IX farnesyltransferase (Gloeothece citriformis (strain PCC 7424) (Cyanothece sp. (strain PCC 7424))).